The sequence spans 175 residues: Large ribosomal subunit protein uL10 (175 aa).

The protein belongs to the universal ribosomal protein uL10 family. As to quaternary structure, part of the ribosomal stalk of the 50S ribosomal subunit. The N-terminus interacts with L11 and the large rRNA to form the base of the stalk. The C-terminus forms an elongated spine to which L12 dimers bind in a sequential fashion forming a multimeric L10(L12)X complex.

Functionally, forms part of the ribosomal stalk, playing a central role in the interaction of the ribosome with GTP-bound translation factors. In Prochlorococcus marinus (strain MIT 9301), this protein is Large ribosomal subunit protein uL10.